A 488-amino-acid polypeptide reads, in one-letter code: MAVLRQFVKNSYSSIPKRFYALSANQKKLLKAPLAECDPTVYKILESEKSRQKESIALIASENFTSRAVMDALGSIMQNKYSEGYPGARYYGGNEFIDQAERLCQTRALEAFHLDGEKWGVNVQPHSGSPANLQAYQAVMKPHDRLMGLDLPHGGHLSHGFSTPQKAISAVSTYFSTMPYNVNKETGIIDYDSLEKAAIQFRPKVIVAGASAYARLVDYKRMRKITEMCNAYLLCDMAHISGLVAAGVIPSPFEYADIVTTTTHKSLRGPRGAMIFYRKGTRSHDKRGNPILYELEDKINFSVFPGHQGGPHNHTITALAVALGQAKTPEFYQYQKDVLSNAKAMANAFITRGYKLVSGGTDTHLVLVDLTDKGVDGARVERILELVNISANKNTVPGDKSALIPRGLRLGTPACTTRGFDEKDFERVVELIDEVVSLTKKINEAALKEGKSKFRDFKAYVGDGSKFSEIAKLKKEVITWAGKFDFPV.

Residues 1–20 (MAVLRQFVKNSYSSIPKRFY) constitute a mitochondrion transit peptide. Lys265 is subject to N6-(pyridoxal phosphate)lysine.

Belongs to the SHMT family. In terms of assembly, homotetramer. The cofactor is pyridoxal 5'-phosphate.

The protein resides in the mitochondrion. It catalyses the reaction (6R)-5,10-methylene-5,6,7,8-tetrahydrofolate + glycine + H2O = (6S)-5,6,7,8-tetrahydrofolate + L-serine. It participates in one-carbon metabolism; tetrahydrofolate interconversion. Interconversion of serine and glycine. The chain is Serine hydroxymethyltransferase, mitochondrial (shm2) from Schizosaccharomyces pombe (strain 972 / ATCC 24843) (Fission yeast).